Here is a 396-residue protein sequence, read N- to C-terminus: L-cysteine desulfidase (396 aa).

Cys-23 (proton acceptor) is an active-site residue. 3 residues coordinate [4Fe-4S] cluster: Cys-288, Cys-330, and Cys-337.

This sequence belongs to the L-cysteine desulfidase family. Homotrimer. Requires [4Fe-4S] cluster as cofactor.

The enzyme catalyses L-cysteine + H2O = hydrogen sulfide + pyruvate + NH4(+) + H(+). Catalyzes the cleavage of L-cysteine to form 2-aminoprop-2-enoate and sulfide. The former then spontaneously hydrolyzes to pyruvate and NH(3). May be responsible for the production of sulfide required for the biosynthesis of iron-sulfur centers in this archaea. The chain is L-cysteine desulfidase from Methanococcus maripaludis (strain C6 / ATCC BAA-1332).